The sequence spans 410 residues: Adenosine receptor A2a (410 aa).

Residues Met1–Ser4 are Extracellular-facing. The helical transmembrane segment at Val5–Trp29 threads the bilayer. Over Ile30–Asn39 the chain is Cytoplasmic. Residues Phe40–Ile63 form a helical membrane-spanning segment. Topologically, residues Ser64–Cys74 are extracellular. Intrachain disulfides connect Cys68–Cys154, Cys71–Cys143, and Cys74–Cys161. The chain crosses the membrane as a helical span at residues Leu75–Ile97. Residues Asp98–Arg117 lie on the Cytoplasmic side of the membrane. A helical membrane pass occupies residues Ala118–Trp140. The Extracellular portion of the chain corresponds to Asn141–Pro168. N-linked (GlcNAc...) asparagine glycosylation is found at Asn142 and Asn149. Position 164 (Glu164) interacts with adenosine. Residues Met169–Leu193 traverse the membrane as a helical segment. At Arg194–Ser229 the chain is on the cytoplasmic side. A helical membrane pass occupies residues Leu230–Phe253. Residue Asn248 participates in adenosine binding. A disulfide bridge links Cys254 with Cys257. Residues Cys254–Pro261 are Extracellular-facing. The chain crosses the membrane as a helical span at residues Pro262–Tyr285. Adenosine contacts are provided by Ser272 and His273. Over Arg286–Ser410 the chain is Cytoplasmic. The interaction with GAS2L2 stretch occupies residues His322 to Ser410. Residues Gly344–Ser410 are disordered. A compositionally biased stretch (basic and acidic residues) spans Arg371–Gly388. Positions Ser401 to Ser410 are enriched in polar residues.

The protein belongs to the G-protein coupled receptor 1 family. As to quaternary structure, interacts (via cytoplasmic C-terminal domain) with USP4; the interaction is direct. May interact with DRD4. Interacts with NECAB2. Interacts (via cytoplasmic C-terminal domain) with GAS2L2; interaction enhances receptor-mediated adenylyl cyclase activity. In terms of processing, ubiquitinated. Deubiquitinated by USP4; leading to stabilization and expression at the cell surface. As to expression, expressed in striatal neurons (at protein level).

It is found in the cell membrane. In terms of biological role, receptor for adenosine. The activity of this receptor is mediated by G proteins which activate adenylyl cyclase. The chain is Adenosine receptor A2a (Adora2a) from Rattus norvegicus (Rat).